A 186-amino-acid polypeptide reads, in one-letter code: Ribosome-recycling factor (186 aa).

This sequence belongs to the RRF family.

The protein localises to the cytoplasm. Responsible for the release of ribosomes from messenger RNA at the termination of protein biosynthesis. May increase the efficiency of translation by recycling ribosomes from one round of translation to another. This is Ribosome-recycling factor from Burkholderia multivorans (strain ATCC 17616 / 249).